The primary structure comprises 305 residues: MVATNNVTEIIFVGFSQNWSEQRVISVMFLLMYTAVVLGNGLIVVTILASKVLTSPMYFFLSYLSFVEICYCSVMAPKLIFDSFIKRKVISLKGCLTQMFSLHFFGGTEAFLLMVMAYDRYVAICKPLHYMAIMNQRMCGLLVRIAWGGGLLHSVGQTFLIFQLPFCGPNIMDHYFCDVHPVLELACADTFFISLLIITNGGSISVVSFFVLMASYLIILHFLRSHNLEGQHKALSTCASHVTVVDLFFIPCSLVYIRPCVTLPADKIVAVFYTVVTPLLNPVIYSFRNAEVKNAMRRFIGGKVI.

Topologically, residues 1 to 23 (MVATNNVTEIIFVGFSQNWSEQR) are extracellular. N-linked (GlcNAc...) asparagine glycosylation is found at asparagine 6 and asparagine 18. Residues 24–47 (VISVMFLLMYTAVVLGNGLIVVTI) form a helical membrane-spanning segment. At 48-55 (LASKVLTS) the chain is on the cytoplasmic side. A helical membrane pass occupies residues 56-77 (PMYFFLSYLSFVEICYCSVMAP). At 78 to 98 (KLIFDSFIKRKVISLKGCLTQ) the chain is on the extracellular side. Cysteine 95 and cysteine 187 form a disulfide bridge. Residues 99 to 118 (MFSLHFFGGTEAFLLMVMAY) traverse the membrane as a helical segment. The Cytoplasmic segment spans residues 119-137 (DRYVAICKPLHYMAIMNQR). The helical transmembrane segment at 138–156 (MCGLLVRIAWGGGLLHSVG) threads the bilayer. Residues 157 to 193 (QTFLIFQLPFCGPNIMDHYFCDVHPVLELACADTFFI) are Extracellular-facing. The chain crosses the membrane as a helical span at residues 194–217 (SLLIITNGGSISVVSFFVLMASYL). At 218–233 (IILHFLRSHNLEGQHK) the chain is on the cytoplasmic side. Residues 234-256 (ALSTCASHVTVVDLFFIPCSLVY) form a helical membrane-spanning segment. The Extracellular portion of the chain corresponds to 257 to 267 (IRPCVTLPADK). A helical transmembrane segment spans residues 268 to 287 (IVAVFYTVVTPLLNPVIYSF). Residues 288–305 (RNAEVKNAMRRFIGGKVI) lie on the Cytoplasmic side of the membrane.

The protein belongs to the G-protein coupled receptor 1 family.

It localises to the cell membrane. In terms of biological role, odorant receptor. This Homo sapiens (Human) protein is Olfactory receptor 4X1 (OR4X1).